The primary structure comprises 964 residues: Translation initiation factor IF-2 (964 aa).

Residues 35–353 (ASSTIEPPVV…RQKRNEYESM (319 aa)) are disordered. Residues 64–108 (KPTPAKPAAKPGAPAPKPGTAQKPTAPTPGAVAAPKPGTAAAKPT) are compositionally biased toward low complexity. Positions 124–133 (PAKPTAPKPA) are enriched in pro residues. The segment covering 145–155 (AAKKAAEDKAT) has biased composition (basic and acidic residues). Residues 166–178 (NAMPRPMAKPGPK) show a composition bias toward pro residues. Residues 220–233 (PRPQGGQRSGAPRD) show a composition bias toward low complexity. 2 stretches are compositionally biased toward gly residues: residues 234 to 252 (GQGG…GPRP) and 290 to 333 (GKGG…GRPG). The span at 337-346 (RRGRKSKRQK) shows a compositional bias: basic residues. Residues 459–631 (KRPPVVTVMG…VCLTADAELD (173 aa)) form the tr-type G domain. Residues 468 to 475 (GHVDHGKT) are G1. 468 to 475 (GHVDHGKT) lines the GTP pocket. The interval 493–497 (GITQG) is G2. Positions 518–521 (DTPG) are G3. Residues 518–522 (DTPGH) and 572–575 (NKID) contribute to the GTP site. Positions 572–575 (NKID) are G4. Positions 608–610 (SAK) are G5.

The protein belongs to the TRAFAC class translation factor GTPase superfamily. Classic translation factor GTPase family. IF-2 subfamily.

The protein resides in the cytoplasm. One of the essential components for the initiation of protein synthesis. Protects formylmethionyl-tRNA from spontaneous hydrolysis and promotes its binding to the 30S ribosomal subunits. Also involved in the hydrolysis of GTP during the formation of the 70S ribosomal complex. The sequence is that of Translation initiation factor IF-2 from Corynebacterium efficiens (strain DSM 44549 / YS-314 / AJ 12310 / JCM 11189 / NBRC 100395).